The following is a 363-amino-acid chain: tRNA/tmRNA (uracil-C(5))-methyltransferase (363 aa).

S-adenosyl-L-methionine contacts are provided by Q187, Y215, N220, E236, and D296. The active-site Nucleophile is the C321. The active-site Proton acceptor is the E355.

It belongs to the class I-like SAM-binding methyltransferase superfamily. RNA M5U methyltransferase family. TrmA subfamily.

The catalysed reaction is uridine(54) in tRNA + S-adenosyl-L-methionine = 5-methyluridine(54) in tRNA + S-adenosyl-L-homocysteine + H(+). It carries out the reaction uridine(341) in tmRNA + S-adenosyl-L-methionine = 5-methyluridine(341) in tmRNA + S-adenosyl-L-homocysteine + H(+). Functionally, dual-specificity methyltransferase that catalyzes the formation of 5-methyluridine at position 54 (m5U54) in all tRNAs, and that of position 341 (m5U341) in tmRNA (transfer-mRNA). The sequence is that of tRNA/tmRNA (uracil-C(5))-methyltransferase from Pseudomonas paraeruginosa (strain DSM 24068 / PA7) (Pseudomonas aeruginosa (strain PA7)).